We begin with the raw amino-acid sequence, 404 residues long: 5-azacytidine-induced protein 2 (404 aa).

A homodimerization region spans residues 1 to 198; it reads MDTLVEDDIC…TELQKARQTG (198 aa). The stretch at 40–198 forms a coiled coil; the sequence is ALVTAYEDIK…TELQKARQTG (159 aa). Residues 229 to 269 are interaction with TBK1 and IKBKE; that stretch reads SDHMQHAYWELRREMANLHLVTRVQAELLRQLKTAAAGKAC. Phosphoserine is present on Ser-330. 2 disordered regions span residues 332–351 and 356–390; these read TDNERLTPNDGADFQEHNSY and LEDNSWVFPSPPKSSETAFGESKSKILPSPNLPPL. Residue Ser-365 is modified to Phosphoserine.

Homodimer. Interacts with IKBKE, TBK1 and TICAM1. Interacts with TAX1BP1. Interacts with CALCOCO2. In terms of processing, ubiquitinated via 'Lys-48'-linked polyubiquitination by TRIM38, leading to its degradation.

The protein resides in the cytoplasm. Functionally, adapter protein which binds TBK1 and IKBKE playing a role in antiviral innate immunity. Activates serine/threonine-protein kinase TBK1 and facilitates its oligomerization. Enhances the phosphorylation of NF-kappa-B p65 subunit RELA by TBK1. Promotes TBK1-induced as well as TNF-alpha or PMA-induced activation of NF-kappa-B. Participates in IFNB promoter activation via TICAM1. The polypeptide is 5-azacytidine-induced protein 2 (Azi2) (Rattus norvegicus (Rat)).